Reading from the N-terminus, the 480-residue chain is Protein DETOXIFICATION 15 (480 aa).

Helical transmembrane passes span 36-56, 69-89, 118-138, 143-163, 180-200, 208-228, 255-275, 294-314, 326-346, 360-380, 396-416, and 428-448; these read GPLIAVSLLQFCLQIISVMFV, IATSFASVTGFTFLMGTASAM, LLSVPLSIVWANTEHFLVFFG, IAHLSGSYARFMIPSIFAYGL, VVICSGVTTSLHVIICWVLVL, GAAVANAISYWLNVILLSCYV, LVIPSAFMVCSLEMWSFELLV, VWMIPFGLSGAASTRVSNELG, RVVLSFSIVESILVGTVLILI, VVSHVASMLPILALGHSLDSF, IGAFVNLGSYYLVGVPFGLLL, and WLGIICALIVQGVCLSLITFF.

The protein belongs to the multi antimicrobial extrusion (MATE) (TC 2.A.66.1) family.

The protein resides in the membrane. This is Protein DETOXIFICATION 15 from Arabidopsis thaliana (Mouse-ear cress).